Consider the following 76-residue polypeptide: Small ribosomal subunit protein bS18 (76 aa).

Belongs to the bacterial ribosomal protein bS18 family. As to quaternary structure, part of the 30S ribosomal subunit. Forms a tight heterodimer with protein bS6.

Functionally, binds as a heterodimer with protein bS6 to the central domain of the 16S rRNA, where it helps stabilize the platform of the 30S subunit. This is Small ribosomal subunit protein bS18 from Alcanivorax borkumensis (strain ATCC 700651 / DSM 11573 / NCIMB 13689 / SK2).